Consider the following 246-residue polypeptide: Small ribosomal subunit protein uS2 (246 aa).

The protein belongs to the universal ribosomal protein uS2 family.

The polypeptide is Small ribosomal subunit protein uS2 (Pseudomonas aeruginosa (strain LESB58)).